Reading from the N-terminus, the 333-residue chain is uncharacterized protein (333 aa).

It to E.coli YfeH.

This is an uncharacterized protein from Pseudomonas aeruginosa (strain ATCC 15692 / DSM 22644 / CIP 104116 / JCM 14847 / LMG 12228 / 1C / PRS 101 / PAO1).